Reading from the N-terminus, the 109-residue chain is Cell division suppressor protein YneA (109 aa).

Positions 40–94 constitute a LysM domain; that stretch reads STVTITKGDTLWELSNKYHNHHHLTTNEFVKWVEDVNDLNSDTAQSLSPGDKLYI.

It belongs to the YneA family.

Its subcellular location is the cytoplasm. Its function is as follows. Inhibits cell division during the SOS response. Affects a later stage of the cell division protein assembly, after the assembly of the Z ring, by probably suppressing recruitment of FtsL and/or DivIC to the division machinery. This is Cell division suppressor protein YneA from Priestia megaterium (strain DSM 319 / IMG 1521) (Bacillus megaterium).